A 535-amino-acid chain; its full sequence is MTAPANNTPAAAATDTSVAALHDKILIVDFGSQVTQLIARRVREDGVYCEIVPFQKAEAAFRQMNPKAVILSGGPESVHEEGSPRAPQLIFESGVPVMGICYGQMTMAAQLGGTVEGGHHREFGRADVEVKTNSLLFDGVWQPGEQHQVWMSHGDRITQMPPGFSVAGVSPNAPFAVIQDEARKYYGLMFHPEVVHTPDGAKLIRNFVRNISGLGGDWTMHAFREEEIKKIRAQVGQGKVICGLSGGVDSAVAAVLIHEAIGDQLTCVFVDHGLLRLNEAETVVDLFRHHYNIPLVHVDASKLFLGELAGVTDPEAKRKTIGRLFIDVFEAEAKKIGGADFLAQGTLYPDVIESVSFTGGPSVTIKSHHNVGGLPARMNMKLVEPLRELFKDEVRVLGRELGLPDVFVGRHPFPGPGLAIRCPGEITTDKLDILRKADAIYIDEIRKAGLYDTIWQAFAVLLPVKTVGVMGDGRTYDYVVGLRAVTSTDGMTADFYPFDMKFLGNTATRIINEVKGVNRVVYDVTSKPPGTIEWE.

In terms of domain architecture, Glutamine amidotransferase type-1 spans 24-217 (KILIVDFGSQ…VRNISGLGGD (194 aa)). Cys101 acts as the Nucleophile in catalysis. Active-site residues include His191 and Glu193. The region spanning 218–410 (WTMHAFREEE…LGLPDVFVGR (193 aa)) is the GMPS ATP-PPase domain. Residue 245–251 (SGGVDSA) participates in ATP binding.

As to quaternary structure, homodimer.

It carries out the reaction XMP + L-glutamine + ATP + H2O = GMP + L-glutamate + AMP + diphosphate + 2 H(+). The protein operates within purine metabolism; GMP biosynthesis; GMP from XMP (L-Gln route): step 1/1. In terms of biological role, catalyzes the synthesis of GMP from XMP. This is GMP synthase [glutamine-hydrolyzing] from Bradyrhizobium sp. (strain ORS 278).